Here is a 414-residue protein sequence, read N- to C-terminus: GPI mannosyltransferase 1 (414 aa).

Transmembrane regions (helical) follow at residues 6-26 (ISHI…FGLY), 87-107 (YIFM…LSGI), 119-139 (IIML…STRG), 149-171 (IMLS…WLGL), 183-203 (LPSI…VPIV), 213-233 (FLIT…SIYG), 282-302 (MEKF…PLLF), 316-336 (FAFV…FLIF), 356-376 (IVAL…AYQL), and 387-407 (GLLF…SVFI).

This sequence belongs to the PIGM family.

It is found in the endoplasmic reticulum membrane. The protein operates within glycolipid biosynthesis; glycosylphosphatidylinositol-anchor biosynthesis. Its function is as follows. Mannosyltransferase involved in glycosylphosphatidylinositol-anchor biosynthesis. Transfers the first alpha-1,4-mannose to GlcN-acyl-PI during GPI precursor assembly. Required for cell wall integrity. The protein is GPI mannosyltransferase 1 (GPI14) of Debaryomyces hansenii (strain ATCC 36239 / CBS 767 / BCRC 21394 / JCM 1990 / NBRC 0083 / IGC 2968) (Yeast).